The following is a 47-amino-acid chain: PhoP/PhoQ regulator MgrB (47 aa).

The helical transmembrane segment at Trp-6–Ile-26 threads the bilayer.

This sequence belongs to the MgrB family. May form homooligomers. Probably interacts with the periplasmic domain of PhoQ.

Its subcellular location is the cell inner membrane. In terms of biological role, phoP-regulated transcription is redox-sensitive, being activated when the periplasm becomes more reducing. MgrB acts between DsbA/DsbB and PhoP/PhoQ in this pathway. Represses PhoP/PhoQ signaling, possibly by binding to the periplasmic domain of PhoQ, altering its activity and that of downstream effector PhoP. This Escherichia fergusonii (strain ATCC 35469 / DSM 13698 / CCUG 18766 / IAM 14443 / JCM 21226 / LMG 7866 / NBRC 102419 / NCTC 12128 / CDC 0568-73) protein is PhoP/PhoQ regulator MgrB.